We begin with the raw amino-acid sequence, 76 residues long: FMRFamide-related neuropeptides (76 aa).

Residues 1–27 form the signal peptide; it reads MCVQTRMLVAVAVVLVVLAVLSDPVSA. Phe39 bears the Phenylalanine amide mark.

This sequence belongs to the FARP (FMRFamide related peptide) family. As to expression, olfactory lobe and accessory lobe, olfactory globular tract, olfactory lobe cells (at protein level). Widely distributed throughout nervous system.

The protein localises to the secreted. GYRKPPFNGSIF-amide may be involved in olfaction and contraction of hindgut. The sequence is that of FMRFamide-related neuropeptides from Procambarus clarkii (Red swamp crayfish).